Reading from the N-terminus, the 691-residue chain is WD repeat-containing protein 48 homolog (691 aa).

WD repeat units lie at residues 27–82 (LHRS…PVQY), 88–130 (RHTD…YLDS), 133–168 (LHTDYVSCLAYAPLAEKVVSASFDRNIFVYDVNSNF), 180–219 (GCKNSIYSLATTPNLSHCLFFSPHQQIRMFDPRTNDKPMK), 222–261 (GHSDNVRALLLNDDGTRALSAGSDGTIRLWDIGMQKNIAT), 264–303 (AHEEGVWTIQVDASFKFVYSGGRDRYVLKSPVNDLSKFQV), 306–347 (KEEA…QNSN), and 399–438 (SGAPAINKYKILNDKRHVLTSDTEDNVALYDVLAGKKVKE).

This sequence belongs to the WD repeat WDR48 family. In terms of assembly, interacts with usp-46; the interaction increases the catalytic activity of usp-46 in the presence of wdr-20.

Together with wdr-20, binds to and stimulates the activity of the deubiquitinating enzyme usp-46, leading to deubiquitination and stabilization of the glr-1 glutamate receptor. In Caenorhabditis briggsae, this protein is WD repeat-containing protein 48 homolog (wdr-48).